The sequence spans 129 residues: uncharacterized protein (129 aa).

This is an uncharacterized protein from Mycobacterium bovis (strain ATCC BAA-935 / AF2122/97).